A 351-amino-acid chain; its full sequence is N-acetyl-gamma-glutamyl-phosphate reductase (351 aa).

Cys-150 is a catalytic residue.

It belongs to the NAGSA dehydrogenase family. Type 1 subfamily.

The protein resides in the cytoplasm. The catalysed reaction is N-acetyl-L-glutamate 5-semialdehyde + phosphate + NADP(+) = N-acetyl-L-glutamyl 5-phosphate + NADPH + H(+). Its pathway is amino-acid biosynthesis; L-arginine biosynthesis; N(2)-acetyl-L-ornithine from L-glutamate: step 3/4. In terms of biological role, catalyzes the NADPH-dependent reduction of N-acetyl-5-glutamyl phosphate to yield N-acetyl-L-glutamate 5-semialdehyde. This is N-acetyl-gamma-glutamyl-phosphate reductase from Heliobacterium modesticaldum (strain ATCC 51547 / Ice1).